A 506-amino-acid chain; its full sequence is NAD(P)H-quinone oxidoreductase subunit 2 (506 aa).

The next 13 helical transmembrane spans lie at 14–34 (AIIP…VDLA), 42–62 (WAPI…ALQW), 79–99 (LAIS…LISW), 108–128 (PIGE…LLCG), 132–152 (LISV…LSGY), 167–187 (LLVG…LYGL), 206–226 (FITS…IAAV), 240–260 (PTPV…AFAI), 276–296 (LLFT…ALAQ), 302–322 (MLAY…VSGT), 330–350 (VLYL…VILF), 374–394 (LGLS…GFFG), and 409–429 (LLVI…ISVI).

This sequence belongs to the complex I subunit 2 family. In terms of assembly, NDH-1 can be composed of about 15 different subunits; different subcomplexes with different compositions have been identified which probably have different functions.

The protein localises to the cellular thylakoid membrane. The enzyme catalyses a plastoquinone + NADH + (n+1) H(+)(in) = a plastoquinol + NAD(+) + n H(+)(out). The catalysed reaction is a plastoquinone + NADPH + (n+1) H(+)(in) = a plastoquinol + NADP(+) + n H(+)(out). NDH-1 shuttles electrons from an unknown electron donor, via FMN and iron-sulfur (Fe-S) centers, to quinones in the respiratory and/or the photosynthetic chain. The immediate electron acceptor for the enzyme in this species is believed to be plastoquinone. Couples the redox reaction to proton translocation, and thus conserves the redox energy in a proton gradient. Cyanobacterial NDH-1 also plays a role in inorganic carbon-concentration. In Prochlorococcus marinus (strain MIT 9215), this protein is NAD(P)H-quinone oxidoreductase subunit 2.